A 242-amino-acid polypeptide reads, in one-letter code: Ribonuclease HII (242 aa).

Residues 21-234 (KIIVGLDEAG…SKNLLKEIEE (214 aa)) form the RNase H type-2 domain. 3 residues coordinate a divalent metal cation: aspartate 27, glutamate 28, and aspartate 128.

Belongs to the RNase HII family. It depends on Mn(2+) as a cofactor. Mg(2+) serves as cofactor.

The protein resides in the cytoplasm. It catalyses the reaction Endonucleolytic cleavage to 5'-phosphomonoester.. In terms of biological role, endonuclease that specifically degrades the RNA of RNA-DNA hybrids. This Methanococcus maripaludis (strain DSM 14266 / JCM 13030 / NBRC 101832 / S2 / LL) protein is Ribonuclease HII.